The sequence spans 149 residues: Arginine repressor (149 aa).

It belongs to the ArgR family.

It is found in the cytoplasm. It functions in the pathway amino-acid biosynthesis; L-arginine biosynthesis [regulation]. Regulates arginine biosynthesis genes. In Shouchella clausii (strain KSM-K16) (Alkalihalobacillus clausii), this protein is Arginine repressor.